The chain runs to 419 residues: BTB/POZ domain-containing protein KCTD20 (419 aa).

Residues 117–191 (EKVTLLVDGT…YKTGIINCPD (75 aa)) form the BTB domain.

In terms of assembly, interacts with AKT1; AKT2 and AKT3. Interacts with PPP2CA and PPP1CA. Part of a complex containing MARK4. As to expression, ubiquitously expressed.

Its subcellular location is the cytoplasm. Its function is as follows. Promotes the phosphorylation of AKT family members. The sequence is that of BTB/POZ domain-containing protein KCTD20 (Kctd20) from Mus musculus (Mouse).